An 83-amino-acid chain; its full sequence is Small proline-rich protein 2A3 (83 aa).

Repeat copies occupy residues P21–P29, Q30–P38, V39–P47, S48–P56, and V57–P65. The interval P21–P65 is 5 X 9 AA approximate tandem repeats.

This sequence belongs to the cornifin (SPRR) family. Forms five pairs of intrachain disulfide bonds.

Its subcellular location is the secreted. The protein localises to the extracellular space. It localises to the cytoplasmic vesicle. The protein resides in the secretory vesicle. In terms of biological role, gut bactericidal protein that selectively kills Gram-positive bacteria by binding to negatively charged lipids on bacterial membranes, leading to bacterial membrane permeabilization and disruption. Specifically binds lipids bearing negatively charged headgroups, such as phosphatidic acid, phosphatidylserine (PS), cardiolipin (CL), and phosphatidylinositol phosphates, but not to zwitterionic or neutral lipids. Induced by type-2 cytokines in response to helminth infection and is required to protect against helminth-induced bacterial invasion of intestinal tissue. May also be involved in the development of the cornified envelope of squamous epithelia; however, additional evidences are required to confirm this result in vivo. This is Small proline-rich protein 2A3 from Mus musculus (Mouse).